The primary structure comprises 289 residues: Inorganic pyrophosphatase (289 aa).

R80 serves as a coordination point for diphosphate. The Mg(2+) site is built by D117, D122, and D154.

Belongs to the PPase family. As to quaternary structure, homodimer. The cofactor is Mg(2+).

Its subcellular location is the cytoplasm. It catalyses the reaction diphosphate + H2O = 2 phosphate + H(+). The protein is Inorganic pyrophosphatase (ppa1) of Schizosaccharomyces pombe (strain 972 / ATCC 24843) (Fission yeast).